We begin with the raw amino-acid sequence, 505 residues long: Lysine--tRNA ligase (505 aa).

Residues E415 and E422 each coordinate Mg(2+).

It belongs to the class-II aminoacyl-tRNA synthetase family. As to quaternary structure, homodimer. Requires Mg(2+) as cofactor.

Its subcellular location is the cytoplasm. It carries out the reaction tRNA(Lys) + L-lysine + ATP = L-lysyl-tRNA(Lys) + AMP + diphosphate. This Shigella boydii serotype 4 (strain Sb227) protein is Lysine--tRNA ligase.